Consider the following 723-residue polypeptide: Polyribonucleotide nucleotidyltransferase (723 aa).

Residues Asp488 and Asp494 each coordinate Mg(2+). Residues 555–614 (PRMITMKIHPDKIREVIGKGGSTIQALTKETGTTIDIQEDGTITIASTSTEGMAEAKRRI) enclose the KH domain. One can recognise an S1 motif domain in the interval 624–692 (GKIYAGTVLK…EKGRLRLSLK (69 aa)). A disordered region spans residues 701–723 (SISPINAGESAAPAAPAGGSEQQ). The span at 707-723 (AGESAAPAAPAGGSEQQ) shows a compositional bias: low complexity.

It belongs to the polyribonucleotide nucleotidyltransferase family. Mg(2+) serves as cofactor.

It is found in the cytoplasm. The catalysed reaction is RNA(n+1) + phosphate = RNA(n) + a ribonucleoside 5'-diphosphate. Involved in mRNA degradation. Catalyzes the phosphorolysis of single-stranded polyribonucleotides processively in the 3'- to 5'-direction. The polypeptide is Polyribonucleotide nucleotidyltransferase (Cupriavidus taiwanensis (strain DSM 17343 / BCRC 17206 / CCUG 44338 / CIP 107171 / LMG 19424 / R1) (Ralstonia taiwanensis (strain LMG 19424))).